The primary structure comprises 475 residues: Ribulose bisphosphate carboxylase large chain (475 aa).

Positions 1–2 (MS) are excised as a propeptide. Pro3 bears the N-acetylproline mark. The residue at position 14 (Lys14) is an N6,N6,N6-trimethyllysine. Asn123 and Thr173 together coordinate substrate. Lys175 (proton acceptor) is an active-site residue. Lys177 provides a ligand contact to substrate. Positions 201, 203, and 204 each coordinate Mg(2+). Position 201 is an N6-carboxylysine (Lys201). His294 serves as the catalytic Proton acceptor. Substrate contacts are provided by Arg295, His327, and Ser379.

The protein belongs to the RuBisCO large chain family. Type I subfamily. In terms of assembly, heterohexadecamer of 8 large chains and 8 small chains; disulfide-linked. The disulfide link is formed within the large subunit homodimers. Requires Mg(2+) as cofactor. Post-translationally, the disulfide bond which can form in the large chain dimeric partners within the hexadecamer appears to be associated with oxidative stress and protein turnover.

It is found in the plastid. The protein localises to the chloroplast. It catalyses the reaction 2 (2R)-3-phosphoglycerate + 2 H(+) = D-ribulose 1,5-bisphosphate + CO2 + H2O. The catalysed reaction is D-ribulose 1,5-bisphosphate + O2 = 2-phosphoglycolate + (2R)-3-phosphoglycerate + 2 H(+). Functionally, ruBisCO catalyzes two reactions: the carboxylation of D-ribulose 1,5-bisphosphate, the primary event in carbon dioxide fixation, as well as the oxidative fragmentation of the pentose substrate in the photorespiration process. Both reactions occur simultaneously and in competition at the same active site. This is Ribulose bisphosphate carboxylase large chain from Pinus balfouriana (Foxtail pine).